The sequence spans 151 residues: Protein NrdI (151 aa).

This sequence belongs to the NrdI family.

Functionally, probably involved in ribonucleotide reductase function. This is Protein NrdI from Mesoplasma florum (strain ATCC 33453 / NBRC 100688 / NCTC 11704 / L1) (Acholeplasma florum).